A 439-amino-acid chain; its full sequence is GTPase Der (439 aa).

EngA-type G domains follow at residues 4-168 and 177-352; these read PIVA…KDDE and INIA…DNYT. GTP contacts are provided by residues 10-17, 57-61, 120-123, 183-190, 230-234, and 295-298; these read GRPNVGKS, DTGGI, NKID, GKPNVGKS, DTAGL, and NKWD. Positions 353–437 constitute a KH-like domain; sequence KRVKTGVLND…GIKLEFRERK (85 aa).

It belongs to the TRAFAC class TrmE-Era-EngA-EngB-Septin-like GTPase superfamily. EngA (Der) GTPase family. In terms of assembly, associates with the 50S ribosomal subunit.

In terms of biological role, GTPase that plays an essential role in the late steps of ribosome biogenesis. The protein is GTPase Der of Clostridium botulinum (strain Okra / Type B1).